The chain runs to 419 residues: Carboxypeptidase A1 (419 aa).

A signal peptide spans 1–16 (MWGLLIFSVLLGGVLA). A propeptide spans 17-110 (KEDFVGHQVL…QEQMFASQGR (94 aa)) (activation peptide). The Peptidase M14 domain maps to 121–414 (TYHTLEEIYD…LALLTIMEHT (294 aa)). Zn(2+) contacts are provided by His-179 and Glu-182. Substrate contacts are provided by residues 179-182 (HSRE), Arg-237, and 254-255 (NR). A disulfide bond links Cys-248 and Cys-271. His-306 contributes to the Zn(2+) binding site. Substrate is bound by residues 307–308 (SY) and Tyr-358. The active-site Proton donor/acceptor is the Glu-380.

It belongs to the peptidase M14 family. As to quaternary structure, monomer. May form a complex with proelastase 2. Zn(2+) serves as cofactor.

It localises to the secreted. It catalyses the reaction Release of a C-terminal amino acid, but little or no action with -Asp, -Glu, -Arg, -Lys or -Pro.. The catalysed reaction is leukotriene C4 + H2O = leukotriene F4 + glycine. Carboxypeptidase that catalyzes the release of a C-terminal amino acid, but has little or no action with -Asp, -Glu, -Arg, -Lys or -Pro. Catalyzes the conversion of leukotriene C4 to leukotriene F4 via the hydrolysis of an amide bond. The chain is Carboxypeptidase A1 (CPA1) from Sus scrofa (Pig).